The sequence spans 565 residues: Mitochondrial distribution and morphology protein 34 (565 aa).

Positions 1–208 constitute an SMP-LTD domain; the sequence is MAFNFNWSPL…VPEYRDRESE (208 aa). Over residues 209–220 the composition is skewed to polar residues; the sequence is SVNTLDLSSESG. 3 disordered regions span residues 209 to 241, 347 to 463, and 533 to 565; these read SVNTLDLSSESGPGQDPLASPPQDPVDASGNAL, FGSY…SRSA, and MQEQKIDPSGSRPFPDFWDDHSREEIPPPAYGH. Basic residues predominate over residues 353–367; it reads PGRHSRSHTKKRKKR. The span at 368-378 shows a compositional bias: basic and acidic residues; the sequence is VVDLRRPKTTD. The segment covering 382 to 391 has biased composition (low complexity); it reads SVSGDSVFSS. Polar residues-rich tracts occupy residues 392–402 and 439–463; these read ENATSAPTIFS and QGDQTLRRSNLSMSEAAQPSSSRSA.

It belongs to the MDM34 family. In terms of assembly, component of the ER-mitochondria encounter structure (ERMES) or MDM complex, composed of mmm1, mdm10, mdm12 and mdm34.

The protein resides in the mitochondrion outer membrane. In terms of biological role, component of the ERMES/MDM complex, which serves as a molecular tether to connect the endoplasmic reticulum (ER) and mitochondria. Components of this complex are involved in the control of mitochondrial shape and protein biogenesis, and function in nonvesicular lipid trafficking between the ER and mitochondria. Mdm34 is required for the interaction of the ER-resident membrane protein mmm1 and the outer mitochondrial membrane-resident beta-barrel protein mdm10. In Talaromyces marneffei (strain ATCC 18224 / CBS 334.59 / QM 7333) (Penicillium marneffei), this protein is Mitochondrial distribution and morphology protein 34.